A 1517-amino-acid chain; its full sequence is DNA-directed RNA polymerase subunit beta' (1517 aa).

Zn(2+)-binding residues include cysteine 71, cysteine 73, cysteine 86, and cysteine 89. Mg(2+) is bound by residues aspartate 482, aspartate 484, and aspartate 486. Residues cysteine 812, cysteine 886, cysteine 893, and cysteine 896 each coordinate Zn(2+).

Belongs to the RNA polymerase beta' chain family. As to quaternary structure, the RNAP catalytic core consists of 2 alpha, 1 beta, 1 beta' and 1 omega subunit. When a sigma factor is associated with the core the holoenzyme is formed, which can initiate transcription. Mg(2+) serves as cofactor. The cofactor is Zn(2+).

The enzyme catalyses RNA(n) + a ribonucleoside 5'-triphosphate = RNA(n+1) + diphosphate. Its function is as follows. DNA-dependent RNA polymerase catalyzes the transcription of DNA into RNA using the four ribonucleoside triphosphates as substrates. The protein is DNA-directed RNA polymerase subunit beta' of Campylobacter lari (strain RM2100 / D67 / ATCC BAA-1060).